Consider the following 99-residue polypeptide: uncharacterized protein (99 aa).

This is an uncharacterized protein from Mycobacterium tuberculosis (strain CDC 1551 / Oshkosh).